The primary structure comprises 229 residues: 7-cyano-7-deazaguanine synthase (229 aa).

8-18 is an ATP binding site; that stretch reads CSGGLDSSVIA. Residues Cys-190, Cys-203, Cys-206, and Cys-209 each coordinate Zn(2+).

This sequence belongs to the QueC family. Zn(2+) serves as cofactor.

It catalyses the reaction 7-carboxy-7-deazaguanine + NH4(+) + ATP = 7-cyano-7-deazaguanine + ADP + phosphate + H2O + H(+). It functions in the pathway purine metabolism; 7-cyano-7-deazaguanine biosynthesis. Functionally, catalyzes the ATP-dependent conversion of 7-carboxy-7-deazaguanine (CDG) to 7-cyano-7-deazaguanine (preQ(0)). The protein is 7-cyano-7-deazaguanine synthase of Methanopyrus kandleri (strain AV19 / DSM 6324 / JCM 9639 / NBRC 100938).